The following is a 52-amino-acid chain: Large ribosomal subunit protein bL33 (52 aa).

It belongs to the bacterial ribosomal protein bL33 family.

The protein is Large ribosomal subunit protein bL33 (rpmG) of Chlamydia pneumoniae (Chlamydophila pneumoniae).